The sequence spans 341 residues: Serpentine receptor class beta-1 (341 aa).

Transmembrane regions (helical) follow at residues A22–L42, F66–I86, G102–I122, L141–F161, C188–V208, L240–I260, and G279–L299.

This sequence belongs to the nematode receptor-like protein srb family.

The protein localises to the membrane. The polypeptide is Serpentine receptor class beta-1 (srb-1) (Caenorhabditis elegans).